A 145-amino-acid polypeptide reads, in one-letter code: Copper transporter 6 (145 aa).

Transmembrane regions (helical) follow at residues 47–67 (LGMYVLCLIVVFLLAVIVEWL) and 99–119 (YLVMLAVMSFNGGVFIVAIAG).

Belongs to the copper transporter (Ctr) (TC 1.A.56) family. SLC31A subfamily.

The protein localises to the membrane. Involved in the transport of copper. This is Copper transporter 6 (COPT6) from Arabidopsis thaliana (Mouse-ear cress).